A 229-amino-acid chain; its full sequence is Small ribosomal subunit protein uS3 (229 aa).

One can recognise a KH type-2 domain in the interval 39-107 (VRQFLIKELK…PAQINISEVR (69 aa)).

This sequence belongs to the universal ribosomal protein uS3 family. As to quaternary structure, part of the 30S ribosomal subunit. Forms a tight complex with proteins S10 and S14.

Its function is as follows. Binds the lower part of the 30S subunit head. Binds mRNA in the 70S ribosome, positioning it for translation. The sequence is that of Small ribosomal subunit protein uS3 from Photobacterium profundum (strain SS9).